We begin with the raw amino-acid sequence, 130 residues long: uncharacterized protein (130 aa).

The signal sequence occupies residues 1–19 (MKVLGNILWWAFVGFMAYA).

This is an uncharacterized protein from Escherichia coli (strain K12).